Consider the following 145-residue polypeptide: D-aminoacyl-tRNA deacylase (145 aa).

The short motif at 137–138 is the Gly-cisPro motif, important for rejection of L-amino acids element; sequence GP.

The protein belongs to the DTD family. Homodimer.

Its subcellular location is the cytoplasm. The catalysed reaction is glycyl-tRNA(Ala) + H2O = tRNA(Ala) + glycine + H(+). It carries out the reaction a D-aminoacyl-tRNA + H2O = a tRNA + a D-alpha-amino acid + H(+). In terms of biological role, an aminoacyl-tRNA editing enzyme that deacylates mischarged D-aminoacyl-tRNAs. Also deacylates mischarged glycyl-tRNA(Ala), protecting cells against glycine mischarging by AlaRS. Acts via tRNA-based rather than protein-based catalysis; rejects L-amino acids rather than detecting D-amino acids in the active site. By recycling D-aminoacyl-tRNA to D-amino acids and free tRNA molecules, this enzyme counteracts the toxicity associated with the formation of D-aminoacyl-tRNA entities in vivo and helps enforce protein L-homochirality. The protein is D-aminoacyl-tRNA deacylase of Shewanella baltica (strain OS223).